We begin with the raw amino-acid sequence, 151 residues long: Large ribosomal subunit protein uL13 (151 aa).

It belongs to the universal ribosomal protein uL13 family. As to quaternary structure, part of the 50S ribosomal subunit.

Its function is as follows. This protein is one of the early assembly proteins of the 50S ribosomal subunit, although it is not seen to bind rRNA by itself. It is important during the early stages of 50S assembly. In Synechococcus sp. (strain JA-2-3B'a(2-13)) (Cyanobacteria bacterium Yellowstone B-Prime), this protein is Large ribosomal subunit protein uL13.